The following is a 350-amino-acid chain: Ookinete surface protein PIMMS43 (350 aa).

Residues 1–24 (MIKLCTFLSLFLIFFFLNLNAING) form the signal peptide. The helical transmembrane segment at 330 to 350 (NSIASKLMSVFVFIAVIIYIL) threads the bilayer.

In terms of assembly, forms multimers, perhaps with an unknown protein(s).

The protein resides in the membrane. Its function is as follows. Involved in ookinete evasion of the mosquito complement-like response, oocyst maturation, sporozoite development and infectivity. The protein is Ookinete surface protein PIMMS43 of Plasmodium berghei (strain Anka).